The following is a 299-amino-acid chain: 4-diphosphocytidyl-2-C-methyl-D-erythritol kinase (299 aa).

Lys18 is a catalytic residue. Residue 104–114 (PIASGIGGGSS) coordinates ATP. Residue Asp146 is part of the active site.

This sequence belongs to the GHMP kinase family. IspE subfamily.

It carries out the reaction 4-CDP-2-C-methyl-D-erythritol + ATP = 4-CDP-2-C-methyl-D-erythritol 2-phosphate + ADP + H(+). The protein operates within isoprenoid biosynthesis; isopentenyl diphosphate biosynthesis via DXP pathway; isopentenyl diphosphate from 1-deoxy-D-xylulose 5-phosphate: step 3/6. Its function is as follows. Catalyzes the phosphorylation of the position 2 hydroxy group of 4-diphosphocytidyl-2C-methyl-D-erythritol. The protein is 4-diphosphocytidyl-2-C-methyl-D-erythritol kinase of Brucella abortus biovar 1 (strain 9-941).